The chain runs to 371 residues: Cytochrome b (371 aa).

Transmembrane regions (helical) follow at residues 25–45 (FGSM…FLAV), 69–90 (WMMQ…YIHI), 105–125 (WMSG…GYVL), and 170–190 (FFAL…LHII). His75 and His89 together coordinate heme b. Heme b contacts are provided by His174 and His188. Residue His193 participates in a ubiquinone binding. 4 consecutive transmembrane segments (helical) span residues 218-238 (HKDL…VSFF), 280-300 (LGGA…PFTH), 312-332 (LSQL…WAAT), and 339-358 (FIAI…LSIP).

The protein belongs to the cytochrome b family. As to quaternary structure, the cytochrome bc1 complex contains 3 respiratory subunits (MT-CYB, CYC1 and UQCRFS1), 2 core proteins (UQCRC1 and UQCRC2) and probably 6 low-molecular weight proteins. It depends on heme b as a cofactor.

It is found in the mitochondrion inner membrane. Component of the ubiquinol-cytochrome c reductase complex (complex III or cytochrome b-c1 complex) that is part of the mitochondrial respiratory chain. The b-c1 complex mediates electron transfer from ubiquinol to cytochrome c. Contributes to the generation of a proton gradient across the mitochondrial membrane that is then used for ATP synthesis. This chain is Cytochrome b (MT-CYB), found in Liasis olivaceus (Olive python).